Here is a 60-residue protein sequence, read N- to C-terminus: Conotoxin PnMRCL-022 (60 aa).

The first 22 residues, 1–22, serve as a signal peptide directing secretion; the sequence is MRCLPVFVILLLLIASTPSVNA. A propeptide spanning residues 23 to 45 is cleaved from the precursor; it reads RPKTKDLASFHDNAKRTQHIFWS.

It belongs to the conotoxin T superfamily. Contains 2 disulfide bonds that can be either 'C1-C3, C2-C4' or 'C1-C4, C2-C3', since these disulfide connectivities have been observed for conotoxins with cysteine framework V (for examples, see AC P0DQQ7 and AC P81755). As to expression, expressed by the venom duct.

It is found in the secreted. This chain is Conotoxin PnMRCL-022, found in Conus pennaceus (Feathered cone).